We begin with the raw amino-acid sequence, 313 residues long: GTPase Era (313 aa).

Residues 20-187 (RSGFVALIGA…MDYLAETLPE (168 aa)) form the Era-type G domain. Residues 28–35 (GATNAGKS) are G1. Position 28–35 (28–35 (GATNAGKS)) interacts with GTP. A G2 region spans residues 54-58 (QTTRA). The G3 stretch occupies residues 75–78 (DTPG). Residues 75–79 (DTPGI) and 137–140 (NKVD) each bind GTP. A G4 region spans residues 137–140 (NKVD). A G5 region spans residues 166-168 (ISA). Residues 218–295 (LHQELPYASH…HLFLFVKVRE (78 aa)) form the KH type-2 domain.

The protein belongs to the TRAFAC class TrmE-Era-EngA-EngB-Septin-like GTPase superfamily. Era GTPase family. As to quaternary structure, monomer.

Its subcellular location is the cytoplasm. It localises to the cell inner membrane. In terms of biological role, an essential GTPase that binds both GDP and GTP, with rapid nucleotide exchange. Plays a role in 16S rRNA processing and 30S ribosomal subunit biogenesis and possibly also in cell cycle regulation and energy metabolism. This Rhizobium meliloti (strain 1021) (Ensifer meliloti) protein is GTPase Era.